A 310-amino-acid polypeptide reads, in one-letter code: MRKDRQNKITEVGIYLKGLQNRLCRAFEKEEGESRFQETLWEKPNGGGGRTRLLTEGHVIEQGGVNFSCVYGNQLPPAATQKHPEISGFAFQAEGLSLVIHPRNPYVPTVHANFRFFIAGKDEADPRWWFGGGYDLTPYYGFEEDCRHWHRVAKKACDRFGEAIYPRFKAACDDYFYLKHRNEPRGIGGLFFDDLNEWEFKRCFEFIKILGDSFLEAYLPIMQNRKNHPYGERQREFQLYRRGRYVEFNLLYDRGTRFGLEFGGRTESILMSLPPRVVWRPNWEPEPGSEEARLYEDYLVRRNWVSVSGA.

S97 serves as a coordination point for substrate. A divalent metal cation-binding residues include H101 and H111. H111 (proton donor) is an active-site residue. 113–115 contributes to the substrate binding site; that stretch reads NFR. A divalent metal cation contacts are provided by H150 and H180. The segment at 245-280 is important for dimerization; the sequence is YVEFNLLYDRGTRFGLEFGGRTESILMSLPPRVVWR. Substrate is bound at residue 263-265; it reads GGR.

Belongs to the aerobic coproporphyrinogen-III oxidase family. Homodimer. It depends on a divalent metal cation as a cofactor.

It localises to the cytoplasm. The enzyme catalyses coproporphyrinogen III + O2 + 2 H(+) = protoporphyrinogen IX + 2 CO2 + 2 H2O. It functions in the pathway porphyrin-containing compound metabolism; protoporphyrin-IX biosynthesis; protoporphyrinogen-IX from coproporphyrinogen-III (O2 route): step 1/1. Functionally, involved in the heme biosynthesis. Catalyzes the aerobic oxidative decarboxylation of propionate groups of rings A and B of coproporphyrinogen-III to yield the vinyl groups in protoporphyrinogen-IX. This is Oxygen-dependent coproporphyrinogen-III oxidase from Coxiella burnetii (strain RSA 331 / Henzerling II).